Reading from the N-terminus, the 583-residue chain is uncharacterized protein (583 aa).

This is an uncharacterized protein from Schizosaccharomyces pombe (strain 972 / ATCC 24843) (Fission yeast).